The chain runs to 146 residues: MSIIQEFREFAVKGNMIDLAVGVIIGGAFGKIVDSLVKDIIMPLITVITGGGVDFTQKFVVLGNNPDNLQSLDALQKAGVNVLTYGNFLTILINFIILAWVVFLMVKLINRMRRKQEEAPAAPAPTPEDIALLREIRDELKNRPQV.

Helical transmembrane passes span 17 to 37, 40 to 60, and 89 to 109; these read IDLA…DSLV, IIMP…QKFV, and LTIL…VKLI.

It belongs to the MscL family. As to quaternary structure, homopentamer.

It localises to the cell inner membrane. In terms of biological role, channel that opens in response to stretch forces in the membrane lipid bilayer. May participate in the regulation of osmotic pressure changes within the cell. The sequence is that of Large-conductance mechanosensitive channel from Acinetobacter baylyi (strain ATCC 33305 / BD413 / ADP1).